The sequence spans 418 residues: MADTPALIPQSDTTPRCWALIPCAGTGSRAGATGPKQYQLLAGKPMVLHTLAAFAAVPRIARTLVVVAPDDAFFASQTLTDARFLVAACGGSTRAASVLNGLNFLLGQGAARHDWVLVHDAARCLIRPDQIDQLIDACWQDDVGGLLALPLPDTLKRESLGRVAATLERADKWLAQTPQMFRLGSLLDALQVAGTTVTDESSAMEAMGLSPKLVPGSAQNFKVTYPQDFCLAEAVLMTRSSGDSAPQQSASEFKRASDMNFRIGEGWDIHALVAGRKLLLGGVEIPYHLGLLGHSDADVLLHAITDALLGAAALGDIGTHFPDTDARFKGADSLVLLTEAARRVRAKGFEIGNVDSTVIAQAPKLMPYMAAMRAQIALALALEVDQVNVKAKTAEKMGPVGLGQAMEARATVLLRKFI.

Positions 1-261 (MADTPALIPQ…EFKRASDMNF (261 aa)) are 2-C-methyl-D-erythritol 4-phosphate cytidylyltransferase. Residues 262 to 418 (RIGEGWDIHA…RATVLLRKFI (157 aa)) are 2-C-methyl-D-erythritol 2,4-cyclodiphosphate synthase. Asp268 and His270 together coordinate a divalent metal cation. Residues 268-270 (DIH) and 294-295 (HS) contribute to the 4-CDP-2-C-methyl-D-erythritol 2-phosphate site. His302 contributes to the a divalent metal cation binding site. 4-CDP-2-C-methyl-D-erythritol 2-phosphate-binding positions include 316–318 (DIG) and 321–325 (FPDTD).

It in the N-terminal section; belongs to the IspD/TarI cytidylyltransferase family. IspD subfamily. The protein in the C-terminal section; belongs to the IspF family. A divalent metal cation is required as a cofactor.

The catalysed reaction is 2-C-methyl-D-erythritol 4-phosphate + CTP + H(+) = 4-CDP-2-C-methyl-D-erythritol + diphosphate. It catalyses the reaction 4-CDP-2-C-methyl-D-erythritol 2-phosphate = 2-C-methyl-D-erythritol 2,4-cyclic diphosphate + CMP. It functions in the pathway isoprenoid biosynthesis; isopentenyl diphosphate biosynthesis via DXP pathway; isopentenyl diphosphate from 1-deoxy-D-xylulose 5-phosphate: step 2/6. The protein operates within isoprenoid biosynthesis; isopentenyl diphosphate biosynthesis via DXP pathway; isopentenyl diphosphate from 1-deoxy-D-xylulose 5-phosphate: step 4/6. Bifunctional enzyme that catalyzes the formation of 4-diphosphocytidyl-2-C-methyl-D-erythritol from CTP and 2-C-methyl-D-erythritol 4-phosphate (MEP) (IspD), and catalyzes the conversion of 4-diphosphocytidyl-2-C-methyl-D-erythritol 2-phosphate (CDP-ME2P) to 2-C-methyl-D-erythritol 2,4-cyclodiphosphate (ME-CPP) with a corresponding release of cytidine 5-monophosphate (CMP) (IspF). In Albidiferax ferrireducens (strain ATCC BAA-621 / DSM 15236 / T118) (Rhodoferax ferrireducens), this protein is Bifunctional enzyme IspD/IspF.